The primary structure comprises 334 residues: Lipoyl synthase (334 aa).

The interval 1 to 36 (MSDALIAPNASSSEAPQSPAEHYDPTRKQKSADKTA) is disordered. Positions 7 to 20 (APNASSSEAPQSPA) are enriched in low complexity. Basic and acidic residues predominate over residues 21 to 36 (EHYDPTRKQKSADKTA). Residues C81, C86, C92, C107, C111, C114, and S321 each contribute to the [4Fe-4S] cluster site. Residues 92-310 (CFGKGTATFM…EEEAYKMGFT (219 aa)) form the Radical SAM core domain.

The protein belongs to the radical SAM superfamily. Lipoyl synthase family. The cofactor is [4Fe-4S] cluster.

The protein localises to the cytoplasm. It catalyses the reaction [[Fe-S] cluster scaffold protein carrying a second [4Fe-4S](2+) cluster] + N(6)-octanoyl-L-lysyl-[protein] + 2 oxidized [2Fe-2S]-[ferredoxin] + 2 S-adenosyl-L-methionine + 4 H(+) = [[Fe-S] cluster scaffold protein] + N(6)-[(R)-dihydrolipoyl]-L-lysyl-[protein] + 4 Fe(3+) + 2 hydrogen sulfide + 2 5'-deoxyadenosine + 2 L-methionine + 2 reduced [2Fe-2S]-[ferredoxin]. It functions in the pathway protein modification; protein lipoylation via endogenous pathway; protein N(6)-(lipoyl)lysine from octanoyl-[acyl-carrier-protein]: step 2/2. Its function is as follows. Catalyzes the radical-mediated insertion of two sulfur atoms into the C-6 and C-8 positions of the octanoyl moiety bound to the lipoyl domains of lipoate-dependent enzymes, thereby converting the octanoylated domains into lipoylated derivatives. This chain is Lipoyl synthase, found in Cupriavidus taiwanensis (strain DSM 17343 / BCRC 17206 / CCUG 44338 / CIP 107171 / LMG 19424 / R1) (Ralstonia taiwanensis (strain LMG 19424)).